A 229-amino-acid chain; its full sequence is Flagellar L-ring protein (229 aa).

Residues 1–25 form the signal peptide; it reads MKQVRLLPSAPVRAVCALAVAALAG. Residue Cys-26 is the site of N-palmitoyl cysteine attachment. Residue Cys-26 is the site of S-diacylglycerol cysteine attachment.

Belongs to the FlgH family. The basal body constitutes a major portion of the flagellar organelle and consists of four rings (L,P,S, and M) mounted on a central rod.

It localises to the cell outer membrane. It is found in the bacterial flagellum basal body. Functionally, assembles around the rod to form the L-ring and probably protects the motor/basal body from shearing forces during rotation. This chain is Flagellar L-ring protein, found in Burkholderia ambifaria (strain MC40-6).